The sequence spans 148 residues: Large ribosomal subunit protein bL9 (148 aa).

This sequence belongs to the bacterial ribosomal protein bL9 family.

Binds to the 23S rRNA. This chain is Large ribosomal subunit protein bL9, found in Geobacter metallireducens (strain ATCC 53774 / DSM 7210 / GS-15).